A 216-amino-acid chain; its full sequence is PEP-dependent dihydroxyacetone kinase 2, ADP-binding subunit DhaL (216 aa).

Positions 9 to 210 (AFFGHVLQDM…SWMLMNVILE (202 aa)) constitute a DhaL domain. Residues Asp33, Asp38, and Asp40 each contribute to the Mg(2+) site. ADP contacts are provided by residues 41–44 (HGIN), 84–85 (AS), Gly126, Met135, Arg182, and 195–197 (DPG).

Homodimer. The dihydroxyacetone kinase complex is composed of a homodimer of DhaM, a homodimer of DhaK and the subunit DhaL. Mg(2+) serves as cofactor.

It is found in the cytoplasm. It carries out the reaction dihydroxyacetone + phosphoenolpyruvate = dihydroxyacetone phosphate + pyruvate. The protein operates within polyol metabolism; glycerol degradation. In terms of biological role, ADP-binding subunit of the dihydroxyacetone kinase, which is responsible for the phosphoenolpyruvate (PEP)-dependent phosphorylation of dihydroxyacetone. DhaL-ADP is converted to DhaL-ATP via a phosphoryl group transfer from DhaM and transmits it to dihydroxyacetone binds to DhaK. This chain is PEP-dependent dihydroxyacetone kinase 2, ADP-binding subunit DhaL, found in Listeria innocua serovar 6a (strain ATCC BAA-680 / CLIP 11262).